The following is a 201-amino-acid chain: dCTP deaminase, dUMP-forming (201 aa).

Residues 101–106 (KSSLGR), Asp119, 127–129 (TLE), Gln148, Tyr162, and Gln174 contribute to the dCTP site. Glu129 (proton donor/acceptor) is an active-site residue.

The protein belongs to the dCTP deaminase family. Homotrimer.

The enzyme catalyses dCTP + 2 H2O = dUMP + NH4(+) + diphosphate. It participates in pyrimidine metabolism; dUMP biosynthesis; dUMP from dCTP: step 1/1. Functionally, bifunctional enzyme that catalyzes both the deamination of dCTP to dUTP and the hydrolysis of dUTP to dUMP without releasing the toxic dUTP intermediate. The polypeptide is dCTP deaminase, dUMP-forming (Clavibacter michiganensis subsp. michiganensis (strain NCPPB 382)).